The following is a 555-amino-acid chain: MAQLSDLEIANLSKLKPISEIARKVGITEDALEPYGHYKAKIDINQIQEQEKKGKVVLVTAMSPTPAGEGKSTVTVGLADAFNKLNHNVTVALREPALGPTFGIKGGATGGGYAQVLPMEDINLHFNGDFHAITTANNALSAFIDNHLHQGNELGIDQRRIEWKRVLDMNDRALRHVNVGLGGTTHGVPREDGFNITVASEIMAILCLSRNIKDLKEKISRITIGYTRHHKPITVSDLKVEGALTLILKDAIKPNLVQTIEGTPALVHGGPFANIAHGCNSILATETARNLSDIVVTEAGFGSDLGAEKFMNIKAREAGFDPSAVVVVATIRALKMHGGVAKDQLQHENIEAVEAGLVNLERHVNNIKKYGVEPIVALNAFIHDTPSETACVKQWAKDNQVRIALTEVWEKGGEGGIELANQVFDVMQEPQNFKHLYELKQPLEAKIETIVKEIYGGSKVNFSSKAQKQLKQFKENGWDEYPICMAKTQYSFSDDQTLLGAPNDFEITIRELEAKTGAGFIVALTGAIMTMPGLPKKPAALNMDVTDDGKAIGLF.

Residue 65-72 (TPAGEGKS) coordinates ATP.

The protein belongs to the formate--tetrahydrofolate ligase family.

The catalysed reaction is (6S)-5,6,7,8-tetrahydrofolate + formate + ATP = (6R)-10-formyltetrahydrofolate + ADP + phosphate. It functions in the pathway one-carbon metabolism; tetrahydrofolate interconversion. This chain is Formate--tetrahydrofolate ligase, found in Staphylococcus epidermidis (strain ATCC 35984 / DSM 28319 / BCRC 17069 / CCUG 31568 / BM 3577 / RP62A).